Here is a 576-residue protein sequence, read N- to C-terminus: Arginine--tRNA ligase (576 aa).

Positions 126-136 (ANPTGPMHIGH) match the 'HIGH' region motif.

This sequence belongs to the class-I aminoacyl-tRNA synthetase family. Monomer.

It localises to the cytoplasm. The enzyme catalyses tRNA(Arg) + L-arginine + ATP = L-arginyl-tRNA(Arg) + AMP + diphosphate. The protein is Arginine--tRNA ligase of Rickettsia peacockii (strain Rustic).